Reading from the N-terminus, the 523-residue chain is Solute carrier family 2, facilitated glucose transporter member 2 (523 aa).

Residues 1–10 lie on the Cytoplasmic side of the membrane; that stretch reads MSEDKITGTL. The chain crosses the membrane as a helical span at residues 11–31; that stretch reads AFTVFTAVLSSFQFGYDIGVI. At 32–97 the chain is on the extracellular side; the sequence is NAPQEVIISH…SAHIVTMLWS (66 aa). N-linked (GlcNAc...) asparagine glycosylation is present at Asn62. A helical transmembrane segment spans residues 98–118; sequence LSVSSFAVGGMVASFFGGWLG. At 119-126 the chain is on the cytoplasmic side; it reads DKLGRIKA. The chain crosses the membrane as a helical span at residues 127 to 147; the sequence is MLAANSLSLTGALLMGCSKFG. The Extracellular segment spans residues 148 to 157; the sequence is PAHALIIAGR. Residues 158–178 form a helical membrane-spanning segment; that stretch reads SVSGLYCGLISGLVPMYIGEI. Residues 179–186 are Cytoplasmic-facing; it reads APTTLRGA. The chain crosses the membrane as a helical span at residues 187-207; that stretch reads LGTLHQLALVTGILISQIAGL. D-glucose is bound at residue Gln192. Over 208–216 the chain is Extracellular; that stretch reads SFILGNQDH. A helical transmembrane segment spans residues 217-237; that stretch reads WHILLGLSAVPALLQCLLLLF. Over 238–302 the chain is Cytoplasmic; that stretch reads CPESPRYLYI…LFTDANYRQP (65 aa). A helical membrane pass occupies residues 303-323; sequence ILVALMLHMAQQFSGINGIFY. D-glucose is bound by residues 313–314 and Asn319; that span reads QQ. At 324–337 the chain is on the extracellular side; that stretch reads YSTSIFQTAGISQP. A helical membrane pass occupies residues 338-358; sequence VYATIGVGAINMIFTAVSVLL. Residue Asn348 participates in D-glucose binding. Residues 359–367 lie on the Cytoplasmic side of the membrane; sequence VEKAGRRTL. The helical transmembrane segment at 368–388 threads the bilayer; it reads FLTGMIGMFFCTIFMSVGLVL. The Extracellular portion of the chain corresponds to 389–401; sequence LDKFAWMSYVSMT. A helical transmembrane segment spans residues 402-422; sequence AIFLFVSFFEIGPGPIPWFMV. D-glucose is bound by residues Glu411 and Trp419. The Cytoplasmic segment spans residues 423 to 432; it reads AEFFSQGPRP. The chain crosses the membrane as a helical span at residues 433 to 453; it reads TALALAAFSNWVCNFVIALCF. Residues 454 to 460 lie on the Extracellular side of the membrane; that stretch reads QYIADFL. A helical transmembrane segment spans residues 461 to 481; it reads GPYVFFLFAGVVLVFTLFTFF. Topologically, residues 482–523 are cytoplasmic; that stretch reads KVPETKGKSFEEIAAEFRKKSGSAPPRKAAVQMEFLASSESV. Ser522 carries the phosphoserine modification.

It belongs to the major facilitator superfamily. Sugar transporter (TC 2.A.1.1) family. Glucose transporter subfamily. Post-translationally, N-glycosylated; required for stability and retention at the cell surface of pancreatic beta cells. In embryo, expressed in endoderm layer of yolk sac and liver primordium.

It localises to the cell membrane. It carries out the reaction D-glucose(out) = D-glucose(in). The catalysed reaction is D-fructose(out) = D-fructose(in). The enzyme catalyses L-dehydroascorbate(out) = L-dehydroascorbate(in). It catalyses the reaction D-galactose(in) = D-galactose(out). D-glucose and maltose competitively inhibit fructose transport. D-glucose, D-fructose and maltose inhibit deoxyglucose transport. Functionally, facilitative hexose transporter that mediates the transport of glucose, fructose and galactose. Likely mediates the bidirectional transfer of glucose across the plasma membrane of hepatocytes and is responsible for uptake of glucose by the beta cells; may comprise part of the glucose-sensing mechanism of the beta cell. May also participate with the Na(+)/glucose cotransporter in the transcellular transport of glucose in the small intestine and kidney. Also able to mediate the transport of dehydroascorbate. The protein is Solute carrier family 2, facilitated glucose transporter member 2 of Mus musculus (Mouse).